The primary structure comprises 812 residues: Protein let-653 (812 aa).

The first 21 residues, 1 to 21 (MRHPLISLLLLIAFYSTSSEA), serve as a signal peptide directing secretion. 2 consecutive Apple domains span residues 26–116 (CNSF…WKYC) and 123–209 (CSGE…ENNC). 6 cysteine pairs are disulfide-bonded: Cys-26/Cys-116, Cys-53/Cys-88, Cys-57/Cys-72, Cys-123/Cys-209, Cys-154/Cys-178, and Cys-158/Cys-166. N-linked (GlcNAc...) asparagine glycans are attached at residues Asn-172, Asn-211, and Asn-272. Residues 221-725 (ECRDNGISVS…NTCDDVEGCD (505 aa)) enclose the ZP domain. Composition is skewed to low complexity over residues 375–449 (QVTT…STTT) and 496–584 (PTTT…PASS). 2 disordered regions span residues 375-461 (QVTT…STIM) and 494-584 (DVPT…PASS). Asn-771 carries N-linked (GlcNAc...) asparagine glycosylation.

Cleaved at the C-terminal domain. As to expression, expressed in external cuticle-producing epithelial cells including the epidermis, vulva, rectum, excretory duct and excretory pore.

It is found in the apical cell membrane. The protein resides in the secreted. It localises to the extracellular space. Functionally, required for epithelial tube development and shaping. Involved in the morphogenesis and function of the three unicellular tubes of the excretory system, the canal cell, the duct cell and the pore cell. Also plays a role in cuticle development, alae formation and shaping of the vulval lumen. Required for larval development. The polypeptide is Protein let-653 (Caenorhabditis elegans).